The following is a 103-amino-acid chain: Large ribosomal subunit protein bL21 (103 aa).

It belongs to the bacterial ribosomal protein bL21 family. Part of the 50S ribosomal subunit. Contacts protein L20.

Functionally, this protein binds to 23S rRNA in the presence of protein L20. This is Large ribosomal subunit protein bL21 from Shewanella sp. (strain MR-7).